Consider the following 909-residue polypeptide: E3 ubiquitin-protein ligase HACE1 (909 aa).

Positions 1–21 (MERAMEQLNRLTRSLRRARTV) are N-terminal helix important for homodimerization. ANK repeat units lie at residues 23-55 (LPEDNETAVYTLMPMVMADQHRSVSELLSNSKF), 64-93 (VKRSLLHIAANCGSVECLVLLLKKGANPNY), 97-126 (SGCTPLHLAARNGQKKCMSKLLEYSADVNI), 130-159 (EGLTAIHWLAVNGRTELLHDLVQHVTDVDV), 163-192 (MGQTALHVACQNGHKTTVQCLLDSGADINR), 196-226 (SGATPLYFACSHGQRDTAQILLLRGAKYLPD), and 228-253 (NGVTPLDLCVQGGYGQTCEVLIQYHP). The segment at 398–433 (QDQEAPSLSAFEPPGPGSYESLPPGPGDSKPEVLAG) is disordered. The region spanning 574-909 (NCAKLKQGIA…HCGSYGYTMA (336 aa)) is the HECT domain. Cysteine 876 acts as the Glycyl thioester intermediate in catalysis.

Homodimer. The homodimer is autoinhibited and stabilized by its N-terminal helix. Interacts with RAB1 (RAB1A, RAB1B or RAB1C), RAB4 (RAB4A or RAB4B) and RAB11 (RAB11A or RAB11B); in a GTP-dependent manner. Interacts with the 26S proteasomal complex through the 20S core proteasomal subunit. Interacts with RARB. Post-translationally, autoubiquitinated.

It is found in the golgi apparatus. The protein localises to the golgi stack membrane. The protein resides in the cytoplasm. It localises to the endoplasmic reticulum. It carries out the reaction S-ubiquitinyl-[E2 ubiquitin-conjugating enzyme]-L-cysteine + [acceptor protein]-L-lysine = [E2 ubiquitin-conjugating enzyme]-L-cysteine + N(6)-ubiquitinyl-[acceptor protein]-L-lysine.. It participates in protein modification; protein ubiquitination. With respect to regulation, sterically autoinhibited in its dimeric state. In terms of biological role, E3 ubiquitin-protein ligase involved in Golgi membrane fusion and regulation of small GTPases. Acts as a regulator of Golgi membrane dynamics during the cell cycle: recruited to Golgi membrane by Rab proteins and regulates postmitotic Golgi membrane fusion. Acts by mediating ubiquitination during mitotic Golgi disassembly, ubiquitination serving as a signal for Golgi reassembly later, after cell division. Specifically binds GTP-bound RAC1, mediating ubiquitination and subsequent degradation of active RAC1, thereby playing a role in host defense against pathogens. May also act as a transcription regulator via its interaction with RARB. The polypeptide is E3 ubiquitin-protein ligase HACE1 (Hace1) (Mus musculus (Mouse)).